The primary structure comprises 113 residues: Hemerythrin (113 aa).

Residues His-25, His-54, Glu-58, His-73, His-77, His-101, and Asp-106 each contribute to the Fe cation site.

Belongs to the hemerythrin family. As to quaternary structure, homooctamer.

In terms of biological role, hemerythrin is a respiratory protein in blood cells of certain marine worms. The oxygen-binding site in each chain contains two iron atoms. The polypeptide is Hemerythrin (Themiste dyscrita (Peanut worm)).